A 313-amino-acid polypeptide reads, in one-letter code: Protoheme IX farnesyltransferase (313 aa).

Transmembrane regions (helical) follow at residues 35-55, 56-76, 98-118, 120-140, 153-173, 180-200, 226-246, 248-268, and 285-305; these read LVIF…HPVL, AFTS…LNMW, VSKP…VVTL, ILVN…YVVI, IVIG…AAAG, MLLF…LALF, ILLY…LGYF, AIYG…TLRV, and FKFS…EVIV.

It belongs to the UbiA prenyltransferase family. Protoheme IX farnesyltransferase subfamily.

It is found in the cell inner membrane. The enzyme catalyses heme b + (2E,6E)-farnesyl diphosphate + H2O = Fe(II)-heme o + diphosphate. The protein operates within porphyrin-containing compound metabolism; heme O biosynthesis; heme O from protoheme: step 1/1. Its function is as follows. Converts heme B (protoheme IX) to heme O by substitution of the vinyl group on carbon 2 of heme B porphyrin ring with a hydroxyethyl farnesyl side group. This is Protoheme IX farnesyltransferase from Rhodopseudomonas palustris (strain BisB18).